The following is a 349-amino-acid chain: GDSL esterase/lipase At1g58725 (349 aa).

The first 19 residues, 1–19, serve as a signal peptide directing secretion; it reads MKIQILLFALVLIFVEANA. Asparagine 25 carries N-linked (GlcNAc...) asparagine glycosylation. The active-site Nucleophile is the serine 37. Residue asparagine 316 is glycosylated (N-linked (GlcNAc...) asparagine). Catalysis depends on residues aspartate 324 and histidine 327.

It belongs to the 'GDSL' lipolytic enzyme family.

It localises to the secreted. This chain is GDSL esterase/lipase At1g58725, found in Arabidopsis thaliana (Mouse-ear cress).